We begin with the raw amino-acid sequence, 471 residues long: Heat shock 70 kDa protein 13 (471 aa).

An N-terminal signal peptide occupies residues 1-22; it reads MAGEMTILGSAVLTLLLAGYLA. The span at 317-330 shows a compositional bias: basic and acidic residues; it reads DSKEPQNGDSELPK. The segment at 317–350 is disordered; it reads DSKEPQNGDSELPKDQLTPGDGHHVNRVFRPGLS.

Belongs to the heat shock protein 70 family. In terms of assembly, binds UBQLN2.

It localises to the microsome. Its subcellular location is the endoplasmic reticulum. Its function is as follows. Has peptide-independent ATPase activity. This Mus musculus (Mouse) protein is Heat shock 70 kDa protein 13 (Hspa13).